A 214-amino-acid chain; its full sequence is Uridine kinase (214 aa).

Residue glycine 11–threonine 18 coordinates ATP.

This sequence belongs to the uridine kinase family.

It localises to the cytoplasm. It carries out the reaction uridine + ATP = UMP + ADP + H(+). The catalysed reaction is cytidine + ATP = CMP + ADP + H(+). It participates in pyrimidine metabolism; CTP biosynthesis via salvage pathway; CTP from cytidine: step 1/3. Its pathway is pyrimidine metabolism; UMP biosynthesis via salvage pathway; UMP from uridine: step 1/1. This chain is Uridine kinase, found in Brevibacillus brevis (strain 47 / JCM 6285 / NBRC 100599).